The sequence spans 489 residues: Putative (R)-citramalate synthase CimA (489 aa).

In terms of domain architecture, Pyruvate carboxyltransferase spans 3-255 (VKILDTTLRD…KTKIKKERLY (253 aa)).

It belongs to the alpha-IPM synthase/homocitrate synthase family. Homodimer.

The catalysed reaction is pyruvate + acetyl-CoA + H2O = (3R)-citramalate + CoA + H(+). Its pathway is amino-acid biosynthesis; L-isoleucine biosynthesis; 2-oxobutanoate from pyruvate: step 1/3. Its function is as follows. Catalyzes the condensation of pyruvate and acetyl-coenzyme A to form (R)-citramalate. This Archaeoglobus fulgidus (strain ATCC 49558 / DSM 4304 / JCM 9628 / NBRC 100126 / VC-16) protein is Putative (R)-citramalate synthase CimA (cimA).